We begin with the raw amino-acid sequence, 274 residues long: Elongation factor Ts (274 aa).

Residues 79 to 82 (TDFV) form an involved in Mg(2+) ion dislocation from EF-Tu region.

It belongs to the EF-Ts family.

The protein localises to the cytoplasm. Functionally, associates with the EF-Tu.GDP complex and induces the exchange of GDP to GTP. It remains bound to the aminoacyl-tRNA.EF-Tu.GTP complex up to the GTP hydrolysis stage on the ribosome. This is Elongation factor Ts from Aster yellows witches'-broom phytoplasma (strain AYWB).